The chain runs to 818 residues: Glycogen phosphorylase (818 aa).

Lys-667 is modified (N6-(pyridoxal phosphate)lysine).

Belongs to the glycogen phosphorylase family. Pyridoxal 5'-phosphate serves as cofactor.

It carries out the reaction [(1-&gt;4)-alpha-D-glucosyl](n) + phosphate = [(1-&gt;4)-alpha-D-glucosyl](n-1) + alpha-D-glucose 1-phosphate. Phosphorylase is an important allosteric enzyme in carbohydrate metabolism. Enzymes from different sources differ in their regulatory mechanisms and in their natural substrates. However, all known phosphorylases share catalytic and structural properties. This is Glycogen phosphorylase (glgP) from Pasteurella multocida (strain Pm70).